Here is a 114-residue protein sequence, read N- to C-terminus: Large ribosomal subunit protein bL19 (114 aa).

This sequence belongs to the bacterial ribosomal protein bL19 family.

Its function is as follows. This protein is located at the 30S-50S ribosomal subunit interface and may play a role in the structure and function of the aminoacyl-tRNA binding site. The sequence is that of Large ribosomal subunit protein bL19 from Lysinibacillus sphaericus (strain C3-41).